Consider the following 298-residue polypeptide: MFKENTIKLGIAPIAWTNDDMPELGAENTFEQCISEMALAGFNGSEVGNKYPRNTVVLKKSLELRNLEIASAWFSTFLTTKPIEETVEEFIKHRDFLHDMGAKVIVVSEQGHSIQGLMDVPLFKNKPVFTEEEWDKLADGLHHLGKLAQEKGLHIVYHHHMGTGVQTTAEIEKLMDMTDPELVSLLFDTGHLVFSGEEPLYILKKYLSRIKHVHLKDIRQEVVDIVKENELSFLQAVKNGAFTVPGDGVIGFDKVFTILANSDYKGWFVVEAEQDPALANPFEYALKARKFIQEKAGL.

The protein belongs to the IolE/MocC family. The cofactor is glutathione. Co(2+) is required as a cofactor. Requires Mn(2+) as cofactor.

The enzyme catalyses scyllo-inosose = 3D-3,5/4-trihydroxycyclohexane-1,2-dione + H2O. Its pathway is polyol metabolism; myo-inositol degradation into acetyl-CoA; acetyl-CoA from myo-inositol: step 2/7. Functionally, catalyzes the dehydration of inosose (2-keto-myo-inositol, 2KMI or 2,4,6/3,5-pentahydroxycyclohexanone) to 3D-(3,5/4)-trihydroxycyclohexane-1,2-dione (D-2,3-diketo-4-deoxy-epi-inositol). The protein is Inosose dehydratase of Bacillus cereus (strain AH820).